The sequence spans 196 residues: Imidazole glycerol phosphate synthase subunit HisH (196 aa).

The 195-residue stretch at 2–196 (KVAVIKYNAG…ERIIKNFLEL (195 aa)) folds into the Glutamine amidotransferase type-1 domain. Cys77 functions as the Nucleophile in the catalytic mechanism. Residues His178 and Glu180 contribute to the active site.

As to quaternary structure, heterodimer of HisH and HisF.

The protein localises to the cytoplasm. It catalyses the reaction 5-[(5-phospho-1-deoxy-D-ribulos-1-ylimino)methylamino]-1-(5-phospho-beta-D-ribosyl)imidazole-4-carboxamide + L-glutamine = D-erythro-1-(imidazol-4-yl)glycerol 3-phosphate + 5-amino-1-(5-phospho-beta-D-ribosyl)imidazole-4-carboxamide + L-glutamate + H(+). It carries out the reaction L-glutamine + H2O = L-glutamate + NH4(+). The protein operates within amino-acid biosynthesis; L-histidine biosynthesis; L-histidine from 5-phospho-alpha-D-ribose 1-diphosphate: step 5/9. IGPS catalyzes the conversion of PRFAR and glutamine to IGP, AICAR and glutamate. The HisH subunit catalyzes the hydrolysis of glutamine to glutamate and ammonia as part of the synthesis of IGP and AICAR. The resulting ammonia molecule is channeled to the active site of HisF. The chain is Imidazole glycerol phosphate synthase subunit HisH from Bacteroides fragilis (strain ATCC 25285 / DSM 2151 / CCUG 4856 / JCM 11019 / LMG 10263 / NCTC 9343 / Onslow / VPI 2553 / EN-2).